The following is a 263-amino-acid chain: 4-hydroxy-tetrahydrodipicolinate reductase (263 aa).

Residues 7 to 12 (GFKGRM), 96 to 98 (GTT), and 122 to 125 (APNF) contribute to the NAD(+) site. Residue histidine 152 is the Proton donor/acceptor of the active site. Histidine 153 contacts (S)-2,3,4,5-tetrahydrodipicolinate. Catalysis depends on lysine 156, which acts as the Proton donor. Position 162 to 163 (162 to 163 (GT)) interacts with (S)-2,3,4,5-tetrahydrodipicolinate.

Belongs to the DapB family.

Its subcellular location is the cytoplasm. The enzyme catalyses (S)-2,3,4,5-tetrahydrodipicolinate + NAD(+) + H2O = (2S,4S)-4-hydroxy-2,3,4,5-tetrahydrodipicolinate + NADH + H(+). The catalysed reaction is (S)-2,3,4,5-tetrahydrodipicolinate + NADP(+) + H2O = (2S,4S)-4-hydroxy-2,3,4,5-tetrahydrodipicolinate + NADPH + H(+). It participates in amino-acid biosynthesis; L-lysine biosynthesis via DAP pathway; (S)-tetrahydrodipicolinate from L-aspartate: step 4/4. Catalyzes the conversion of 4-hydroxy-tetrahydrodipicolinate (HTPA) to tetrahydrodipicolinate. This is 4-hydroxy-tetrahydrodipicolinate reductase from Listeria welshimeri serovar 6b (strain ATCC 35897 / DSM 20650 / CCUG 15529 / CIP 8149 / NCTC 11857 / SLCC 5334 / V8).